Here is a 204-residue protein sequence, read N- to C-terminus: GTP cyclohydrolase-2 (204 aa).

Arginine 49–glutamate 53 is a binding site for GTP. Zn(2+)-binding residues include cysteine 54, cysteine 65, and cysteine 67. GTP is bound by residues glutamine 70, glutamate 92 to arginine 94, and threonine 114. Aspartate 126 functions as the Proton acceptor in the catalytic mechanism. The active-site Nucleophile is the arginine 128. 2 residues coordinate GTP: threonine 149 and lysine 154.

The protein belongs to the GTP cyclohydrolase II family. Zn(2+) is required as a cofactor.

It catalyses the reaction GTP + 4 H2O = 2,5-diamino-6-hydroxy-4-(5-phosphoribosylamino)-pyrimidine + formate + 2 phosphate + 3 H(+). Its pathway is cofactor biosynthesis; riboflavin biosynthesis; 5-amino-6-(D-ribitylamino)uracil from GTP: step 1/4. Functionally, catalyzes the conversion of GTP to 2,5-diamino-6-ribosylamino-4(3H)-pyrimidinone 5'-phosphate (DARP), formate and pyrophosphate. The polypeptide is GTP cyclohydrolase-2 (Shewanella baltica (strain OS223)).